The sequence spans 67 residues: MKYFLVLVVLTLILAISVGQSDALFVDIIDNVENAIHKAAKTGIGMVKPIENIFIPNQQKKSTEASN.

Residues 1–19 (MKYFLVLVVLTLILAISVG) form the signal peptide.

It belongs to the andropin family. Ejaculatory duct of adult males.

The protein localises to the secreted. Functionally, male-specific peptide with moderate activity against Gram-positive bacteria. This chain is Andropin (Anp), found in Drosophila orena (Fruit fly).